The chain runs to 38 residues: Cytochrome b6-f complex subunit 5 (38 aa).

A helical transmembrane segment spans residues 5–25 (LLCGIVLGLIPVTLLGLFVDA).

Belongs to the PetG family. The 4 large subunits of the cytochrome b6-f complex are cytochrome b6, subunit IV (17 kDa polypeptide, PetD), cytochrome f and the Rieske protein, while the 4 small subunits are PetG, PetL, PetM and PetN. The complex functions as a dimer.

The protein localises to the cellular thylakoid membrane. Functionally, component of the cytochrome b6-f complex, which mediates electron transfer between photosystem II (PSII) and photosystem I (PSI), cyclic electron flow around PSI, and state transitions. PetG is required for either the stability or assembly of the cytochrome b6-f complex. This Prochlorococcus marinus (strain MIT 9313) protein is Cytochrome b6-f complex subunit 5.